Here is a 275-residue protein sequence, read N- to C-terminus: Exosome complex component Rrp42 (275 aa).

This sequence belongs to the RNase PH family. Rrp42 subfamily. In terms of assembly, component of the archaeal exosome complex. Forms a hexameric ring-like arrangement composed of 3 Rrp41-Rrp42 heterodimers. The hexameric ring associates with a trimer of Rrp4 and/or Csl4 subunits.

Its subcellular location is the cytoplasm. In terms of biological role, non-catalytic component of the exosome, which is a complex involved in RNA degradation. Contributes to the structuring of the Rrp41 active site. The chain is Exosome complex component Rrp42 from Saccharolobus islandicus (strain L.S.2.15 / Lassen #1) (Sulfolobus islandicus).